We begin with the raw amino-acid sequence, 371 residues long: Prephenate dehydrogenase (371 aa).

The Prephenate/arogenate dehydrogenase domain maps to 6–295 (DTILLAGLGL…GLPLRQKGAI (290 aa)). Residue 7-37 (TILLAGLGLIGGSIALAIKKNHPGKRIIGID) participates in NAD(+) binding. The 72-residue stretch at 300–371 (DLYVDVPDHP…RAEYETFYAD (72 aa)) folds into the ACT domain.

Belongs to the prephenate/arogenate dehydrogenase family.

The enzyme catalyses prephenate + NAD(+) = 3-(4-hydroxyphenyl)pyruvate + CO2 + NADH. Its pathway is amino-acid biosynthesis; L-tyrosine biosynthesis; (4-hydroxyphenyl)pyruvate from prephenate (NAD(+) route): step 1/1. The polypeptide is Prephenate dehydrogenase (tyrA) (Bacillus subtilis (strain 168)).